The primary structure comprises 243 residues: Nuclear cap-binding protein subunit 2 (243 aa).

MRNA is bound by residues Y14, Y37, 106-110 (RVDFD), 117-121 (RQWGR), and 127-128 (QV). The RRM domain occupies 34 to 112 (VTVYVGNMSF…RPIRVDFDWG (79 aa)). Disordered regions lie at residues 120-144 (GRGR…GGYG) and 161-243 (GGAF…RRRR). 2 stretches are compositionally biased toward basic and acidic residues: residues 128-138 (VRDEYRTDYDP) and 173-228 (DRGD…REKG).

The protein belongs to the RRM NCBP2 family. Component of the nuclear cap-binding complex (CBC), a heterodimer composed of ABH1/CBP80 and CBP20 that interacts with m7GpppG-capped RNA.

The protein localises to the nucleus. Its subcellular location is the cytoplasm. Its function is as follows. Component of the cap-binding complex (CBC), which binds co-transcriptionally to the 5' cap of pre-mRNAs and is involved in various processes such as pre-mRNA splicing and RNA-mediated gene silencing (RNAi) by microRNAs (miRNAs). The CBC complex is involved in miRNA-mediated RNA interference and is required for primary miRNA processing. In the CBC complex, CBP20 recognizes and binds capped RNAs (m7GpppG-capped RNA) but requires ABH1/CBP80 to stabilize the movement of its N-terminal loop and lock the CBC into a high affinity cap-binding state with the cap structure. CBP20 also plays a role in stabilization of ABH1/CBP80 and ABH1/CBP80 localization to the nucleus. In Oryza sativa subsp. japonica (Rice), this protein is Nuclear cap-binding protein subunit 2 (CBP20).